The chain runs to 163 residues: Probable ribosome biogenesis protein RLP24 (163 aa).

It belongs to the eukaryotic ribosomal protein eL24 family. As to quaternary structure, associated with nucleolar and cytoplasmic pre-60S particles. At the end of biogenesis it dissociates from cytoplasmic pre-60S particles and is likely to be exchanged for its ribosomal homolog, RPL24.

It is found in the nucleus. The protein resides in the nucleolus. Its function is as follows. Involved in the biogenesis of the 60S ribosomal subunit. Ensures the docking of GTPBP4/NOG1 to pre-60S particles. The sequence is that of Probable ribosome biogenesis protein RLP24 (RSL24D1) from Pongo abelii (Sumatran orangutan).